The primary structure comprises 377 residues: Proteinase-activated receptor 3 (377 aa).

The N-terminal stretch at 1–19 (MRAAIFAAIGALLLSPASC) is a signal peptide. A propeptide spans 20-38 (QSGMEYDADNLAKPTLSIK) (removed for receptor activation). The Extracellular portion of the chain corresponds to 39-94 (TFRGAPQNSFEEFPLSAIEGWTGTTKTVKIKCPEELDSNLHVNNATMGYLSSPLST). Asn-82 is a glycosylation site (N-linked (GlcNAc...) asparagine). The chain crosses the membrane as a helical span at residues 95–120 (KLIPAIYILVFAVGMPANAVTLWMLF). At 121 to 127 (RTRTIRM) the chain is on the cytoplasmic side. A helical transmembrane segment spans residues 128–147 (TIFYTNLAIADFLFCVTLPF). The Extracellular segment spans residues 148 to 166 (RIAYHLNGNNWVFGEVMCR). Cys-165 and Cys-244 are joined by a disulfide. The helical transmembrane segment at 167–188 (ATTVIFYGNMYCSILLLACISI) threads the bilayer. The Cytoplasmic segment spans residues 189–205 (NRYLAIVHPFTYRGLPK). Residues 206-229 (RTYALLTCGLVWTTVFLYMLPFFI) form a helical membrane-spanning segment. Residues 230–259 (LKQEYYLVQQDITTCHDVHNTCESSSPFQL) lie on the Extracellular side of the membrane. A helical membrane pass occupies residues 260–279 (YYFISLAFFGFLIPFLVIIY). The Cytoplasmic segment spans residues 280-296 (CYTAIIWTLNAKDRRWL). Residues 297 to 321 (WYIKASLLTFVIFTICFAPSNIILI) traverse the membrane as a helical segment. Residues 322–335 (IHHANYYYSNTDAL) lie on the Extracellular side of the membrane. Residues 336–360 (YFVYLIALCLGSLNSCLDPFLYFLM) traverse the membrane as a helical segment. Over 361–377 (SKITDHSTAYLTMVKLS) the chain is Cytoplasmic.

The protein belongs to the G-protein coupled receptor 1 family. Interacts with INSC/inscuteable and GPSM2. Post-translationally, a proteolytic cleavage generates a new N-terminus that functions as a tethered ligand.

It localises to the cell membrane. In terms of biological role, receptor for activated thrombin coupled to G proteins that stimulate phosphoinositide hydrolysis. The sequence is that of Proteinase-activated receptor 3 (F2RL2) from Bos taurus (Bovine).